Consider the following 115-residue polypeptide: Large ribosomal subunit protein uL18 (115 aa).

The segment at 1-29 (MISKPDKNKLRQKRHTRVRGKISGTSETP) is disordered. Basic residues predominate over residues 10-20 (LRQKRHTRVRG).

The protein belongs to the universal ribosomal protein uL18 family. Part of the 50S ribosomal subunit; part of the 5S rRNA/L5/L18/L25 subcomplex. Contacts the 5S and 23S rRNAs.

Its function is as follows. This is one of the proteins that bind and probably mediate the attachment of the 5S RNA into the large ribosomal subunit, where it forms part of the central protuberance. This chain is Large ribosomal subunit protein uL18, found in Lactococcus lactis subsp. lactis (strain IL1403) (Streptococcus lactis).